The chain runs to 240 residues: Octanoyltransferase (240 aa).

The BPL/LPL catalytic domain occupies 49 to 233 (HQAEELVWLL…AFESVFGATR (185 aa)). Residues 87–94 (RGGQVTYH), 162–164 (AIG), and 175–177 (GIA) each bind substrate. The active-site Acyl-thioester intermediate is Cys193.

This sequence belongs to the LipB family.

The protein resides in the cytoplasm. It carries out the reaction octanoyl-[ACP] + L-lysyl-[protein] = N(6)-octanoyl-L-lysyl-[protein] + holo-[ACP] + H(+). It functions in the pathway protein modification; protein lipoylation via endogenous pathway; protein N(6)-(lipoyl)lysine from octanoyl-[acyl-carrier-protein]: step 1/2. Functionally, catalyzes the transfer of endogenously produced octanoic acid from octanoyl-acyl-carrier-protein onto the lipoyl domains of lipoate-dependent enzymes. Lipoyl-ACP can also act as a substrate although octanoyl-ACP is likely to be the physiological substrate. This is Octanoyltransferase from Bradyrhizobium sp. (strain ORS 278).